We begin with the raw amino-acid sequence, 102 residues long: MKHLSIFFVFFCCICVMLCDAYGDCKKNSDCKAGECCVNTPPFARSTCQKYLQQGEFCAHMGKYNPLGKYINMCPCGKGLKCQLKDVSGPLALFRSRMLTCV.

Residues 1–21 form the signal peptide; it reads MKHLSIFFVFFCCICVMLCDA.

The protein belongs to the neurotoxin 20 family. As to expression, expressed by the venom gland.

It is found in the secreted. In Caerostris extrusa (Bark spider), this protein is U3-aranetoxin-Ce1a.